The primary structure comprises 868 residues: Protein translocase subunit SecA (868 aa).

ATP is bound by residues glutamine 85, 103–107 (GEGKT), and aspartate 508.

Belongs to the SecA family. Monomer and homodimer. Part of the essential Sec protein translocation apparatus which comprises SecA, SecYEG and auxiliary proteins SecDF. Other proteins may also be involved.

The protein localises to the cell membrane. It is found in the cytoplasm. It carries out the reaction ATP + H2O + cellular proteinSide 1 = ADP + phosphate + cellular proteinSide 2.. Part of the Sec protein translocase complex. Interacts with the SecYEG preprotein conducting channel. Has a central role in coupling the hydrolysis of ATP to the transfer of proteins into and across the cell membrane, serving as an ATP-driven molecular motor driving the stepwise translocation of polypeptide chains across the membrane. The sequence is that of Protein translocase subunit SecA from Deinococcus radiodurans (strain ATCC 13939 / DSM 20539 / JCM 16871 / CCUG 27074 / LMG 4051 / NBRC 15346 / NCIMB 9279 / VKM B-1422 / R1).